The primary structure comprises 688 residues: Collagen alpha-2(IX) chain (688 aa).

The first 22 residues, 1 to 22 (MAPAADPRSLLVLLQVLGLALA), serve as a signal peptide directing secretion. The tract at residues 26-162 (GLPGEPGPPG…PGKPGRPGTI (137 aa)) is triple-helical region 4 (COL4). Disordered regions lie at residues 26–520 (GLPG…RDAS), 549–578 (GATGMMGPPGPPGPPGYPGKQGPHGHPGPR), and 590–662 (IGNT…LPGF). Pro residues-rich tracts occupy residues 30-42 (EPGPPGPPGPPGV) and 105-126 (LPGPPGLPGPGFAGPPGPPGPV). Low complexity predominate over residues 128–138 (LPGEIGLTGPK). Pro residues predominate over residues 143-156 (PEGPSGPPGPPGKP). A 4-hydroxyproline modification is found at P159. The tract at residues 163 to 179 (QGLEGSADFLCPTNCPA) is nonhelical region 4 (NC4). An O-linked (Xyl...) (glycosaminoglycan) serine glycan is attached at S168. Positions 180–518 (GVKGPPGLQG…PGRQGVAGRD (339 aa)) are triple-helical region 3 (COL3). K182 carries the post-translational modification 5-hydroxylysine. O-linked (Gal...) hydroxylysine glycosylation is present at K182. Low complexity-rich tracts occupy residues 251 to 265 (KGMVGSVGAAGSPGE) and 394 to 412 (PVGQPGPQGRQGPKGEQGP). Positions 435 to 444 (GPRGGVGDPG) are enriched in gly residues. Over residues 497–506 (RGLVGDRGLP) the composition is skewed to low complexity. The tract at residues 519–548 (ASDQHIEDVVLKMLQEQLAEMAVSAKREAL) is nonhelical region 3 (NC3). A triple-helical region 2 (COL2) region spans residues 549–631 (GATGMMGPPG…PGLPGRPGQA (83 aa)). Over residues 556 to 565 (PPGPPGPPGY) the composition is skewed to pro residues. Over residues 598-610 (KRGEKGDQGEVGR) the composition is skewed to basic and acidic residues. The tract at residues 632–633 (IN) is nonhelical region 2 (NC2). The interval 634 to 663 (GKDGDRGAPGAPGEAGRPGLPGPIGLPGFC) is triple-helical region 1 (COL1). Residues 641-651 (APGAPGEAGRP) are compositionally biased toward low complexity. The tract at residues 664–688 (EPAACLGASAYASGRLTEPGSIKGP) is nonhelical region 1 (NC1).

This sequence belongs to the fibril-associated collagens with interrupted helices (FACIT) family. As to quaternary structure, heterotrimer of an alpha 1(IX), an alpha 2(IX) and an alpha 3(IX) chain. The chains are linked to each other by interchain disulfide bonds. Trimers are also cross-linked via hydroxylysines. Prolines at the third position of the tripeptide repeating unit (G-X-Y) are hydroxylated in some or all of the chains. In terms of processing, covalently linked to the telopeptides of type II collagen by hydroxylysine-derived cross-links.

It localises to the secreted. The protein resides in the extracellular space. The protein localises to the extracellular matrix. Its function is as follows. Structural component of hyaline cartilage and vitreous of the eye. This is Collagen alpha-2(IX) chain from Bos taurus (Bovine).